We begin with the raw amino-acid sequence, 100 residues long: NADH-quinone oxidoreductase subunit K (100 aa).

Transmembrane regions (helical) follow at residues 4–24 (VTWY…GVLL), 29–49 (LIVM…FLAF), and 61–81 (IAFF…AVVI).

Belongs to the complex I subunit 4L family. In terms of assembly, NDH-1 is composed of 14 different subunits. Subunits NuoA, H, J, K, L, M, N constitute the membrane sector of the complex.

The protein localises to the cell inner membrane. The enzyme catalyses a quinone + NADH + 5 H(+)(in) = a quinol + NAD(+) + 4 H(+)(out). In terms of biological role, NDH-1 shuttles electrons from NADH, via FMN and iron-sulfur (Fe-S) centers, to quinones in the respiratory chain. The immediate electron acceptor for the enzyme in this species is believed to be ubiquinone. Couples the redox reaction to proton translocation (for every two electrons transferred, four hydrogen ions are translocated across the cytoplasmic membrane), and thus conserves the redox energy in a proton gradient. The chain is NADH-quinone oxidoreductase subunit K from Anaeromyxobacter sp. (strain Fw109-5).